The primary structure comprises 307 residues: Homoserine kinase (307 aa).

An ATP-binding site is contributed by 92 to 102 (PLARGLGSSAT).

This sequence belongs to the GHMP kinase family. Homoserine kinase subfamily.

Its subcellular location is the cytoplasm. The catalysed reaction is L-homoserine + ATP = O-phospho-L-homoserine + ADP + H(+). Its pathway is amino-acid biosynthesis; L-threonine biosynthesis; L-threonine from L-aspartate: step 4/5. Catalyzes the ATP-dependent phosphorylation of L-homoserine to L-homoserine phosphate. The chain is Homoserine kinase (thrB) from Microchaete diplosiphon (Fremyella diplosiphon).